The primary structure comprises 212 residues: ATP synthase F(0) complex subunit a (212 aa).

6 helical membrane-spanning segments follow: residues 3–23 (MMGI…IYTS), 58–78 (WAAM…LGLL), 87–107 (QLSM…LTGL), 128–148 (IPLL…ALGV), 169–189 (FVLL…LVLL), and 192–212 (LEIA…TLYL).

Belongs to the ATPase A chain family. Component of the ATP synthase complex composed at least of ATP5F1A/subunit alpha, ATP5F1B/subunit beta, ATP5MC1/subunit c (homooctomer), MT-ATP6/subunit a, MT-ATP8/subunit 8, ATP5ME/subunit e, ATP5MF/subunit f, ATP5MG/subunit g, ATP5MK/subunit k, ATP5MJ/subunit j, ATP5F1C/subunit gamma, ATP5F1D/subunit delta, ATP5F1E/subunit epsilon, ATP5PF/subunit F6, ATP5PB/subunit b, ATP5PD/subunit d, ATP5PO/subunit OSCP. ATP synthase complex consists of a soluble F(1) head domain (subunits alpha(3) and beta(3)) - the catalytic core - and a membrane F(0) domain - the membrane proton channel (subunits c, a, 8, e, f, g, k and j). These two domains are linked by a central stalk (subunits gamma, delta, and epsilon) rotating inside the F1 region and a stationary peripheral stalk (subunits F6, b, d, and OSCP). Interacts with DNAJC30; interaction is direct.

Its subcellular location is the mitochondrion inner membrane. It catalyses the reaction H(+)(in) = H(+)(out). Functionally, subunit a, of the mitochondrial membrane ATP synthase complex (F(1)F(0) ATP synthase or Complex V) that produces ATP from ADP in the presence of a proton gradient across the membrane which is generated by electron transport complexes of the respiratory chain. ATP synthase complex consist of a soluble F(1) head domain - the catalytic core - and a membrane F(1) domain - the membrane proton channel. These two domains are linked by a central stalk rotating inside the F(1) region and a stationary peripheral stalk. During catalysis, ATP synthesis in the catalytic domain of F(1) is coupled via a rotary mechanism of the central stalk subunits to proton translocation. With the subunit c (ATP5MC1), forms the proton-conducting channel in the F(0) domain, that contains two crucial half-channels (inlet and outlet) that facilitate proton movement from the mitochondrial intermembrane space (IMS) into the matrix. Protons are taken up via the inlet half-channel and released through the outlet half-channel, following a Grotthuss mechanism. In Tropidurus hispidus (Peters' lava lizard), this protein is ATP synthase F(0) complex subunit a.